Reading from the N-terminus, the 132-residue chain is Methylglyoxal synthase (132 aa).

The region spanning 1–132 is the MGS-like domain; the sequence is MNIALIAHDQ…LLEWREIEDK (132 aa). The substrate site is built by histidine 8 and lysine 12. Aspartate 60 acts as the Proton donor/acceptor in catalysis. Histidine 87 is a substrate binding site.

It belongs to the methylglyoxal synthase family.

The enzyme catalyses dihydroxyacetone phosphate = methylglyoxal + phosphate. Its function is as follows. Catalyzes the formation of methylglyoxal from dihydroxyacetone phosphate. This chain is Methylglyoxal synthase, found in Thermoanaerobacter pseudethanolicus (strain ATCC 33223 / 39E) (Clostridium thermohydrosulfuricum).